Reading from the N-terminus, the 1234-residue chain is Complement factor H (1234 aa).

Residues 1-18 (MRLSARIIWLILWTVCAA) form the signal peptide. 20 consecutive Sushi domains span residues 19–82 (EDCK…ICRK), 83–143 (KPCG…LCEV), 144–207 (VKCL…RCVE), 208–264 (ILCT…FCEE), 265–322 (KRCS…RCTL), 324–386 (PCEF…VPCV), 387–444 (RKCV…KCIR), 446–507 (KTCS…SCIK), 508–566 (SCDM…SCYE), 567–624 (RECS…TCKG), 627–685 (ASCA…VCIE), 688–745 (RTCG…KCVA), 750–804 (EKCR…NCTS), 806–863 (TSCP…RCIE), 865–933 (IPCS…RCVG), 934–991 (LPCG…KCIK), 992–1050 (TDCD…VCKD), 1051–1109 (NSCV…KCRD), 1112–1170 (GKCG…TCLH), and 1171–1234 (ACVI…PTCV). Disulfide bonds link cysteine 21/cysteine 66, cysteine 52/cysteine 80, cysteine 85/cysteine 129, cysteine 114/cysteine 141, cysteine 146/cysteine 192, cysteine 178/cysteine 205, cysteine 210/cysteine 251, cysteine 237/cysteine 262, cysteine 267/cysteine 309, cysteine 294/cysteine 320, cysteine 325/cysteine 374, cysteine 357/cysteine 385, cysteine 389/cysteine 431, cysteine 416/cysteine 442, cysteine 448/cysteine 494, cysteine 477/cysteine 505, cysteine 509/cysteine 553, cysteine 536/cysteine 564, cysteine 569/cysteine 610, cysteine 597/cysteine 622, cysteine 629/cysteine 672, cysteine 658/cysteine 683, cysteine 690/cysteine 732, cysteine 718/cysteine 743, cysteine 752/cysteine 791, cysteine 780/cysteine 802, cysteine 808/cysteine 850, cysteine 836/cysteine 861, cysteine 867/cysteine 920, cysteine 906/cysteine 931, cysteine 936/cysteine 978, cysteine 964/cysteine 989, cysteine 994/cysteine 1037, cysteine 1023/cysteine 1048, cysteine 1053/cysteine 1096, cysteine 1082/cysteine 1107, cysteine 1114/cysteine 1157, cysteine 1143/cysteine 1168, cysteine 1172/cysteine 1223, and cysteine 1206/cysteine 1233. Residues asparagine 676, asparagine 721, asparagine 773, and asparagine 801 are each glycosylated (N-linked (GlcNAc...) asparagine). Positions 872–896 (TIEHGSINLPRSSEERRDSIESSSH) are disordered. The span at 883 to 896 (SSEERRDSIESSSH) shows a compositional bias: basic and acidic residues. N-linked (GlcNAc...) asparagine glycosylation is found at asparagine 1030 and asparagine 1061. Serine 1198 is subject to Phosphoserine. An N-linked (GlcNAc...) asparagine glycan is attached at asparagine 1225.

As to quaternary structure, homodimer. Also forms homooligomers. Interacts with complement protein C3b; this interaction inhibits complement activation. Interacts with complement protein C3d. Interacts with CR3/ITGAM; this interaction mediates adhesion of neutrophils to pathogens leading to pathogen clearance. Post-translationally, sulfated on tyrosine residues. In terms of tissue distribution, CFH is one of the most abundant complement components in blood where the liver is the major source of CFH protein in vivo. in addition, CFH is secreted by additional cell types including monocytes, fibroblasts, or endothelial cells.

The protein resides in the secreted. Functionally, glycoprotein that plays an essential role in maintaining a well-balanced immune response by modulating complement activation. Acts as a soluble inhibitor of complement, where its binding to self markers such as glycan structures prevents complement activation and amplification on cell surfaces. Accelerates the decay of the complement alternative pathway (AP) C3 convertase C3bBb, thus preventing local formation of more C3b, the central player of the complement amplification loop. As a cofactor of the serine protease factor I, CFH also regulates proteolytic degradation of already-deposited C3b. In addition, mediates several cellular responses through interaction with specific receptors. For example, interacts with CR3/ITGAM receptor and thereby mediates the adhesion of human neutrophils to different pathogens. In turn, these pathogens are phagocytosed and destroyed. The polypeptide is Complement factor H (Cfh) (Mus musculus (Mouse)).